We begin with the raw amino-acid sequence, 309 residues long: tRNA dimethylallyltransferase (309 aa).

Residue 13-20 (GPTGAGKT) participates in ATP binding. 15–20 (TGAGKT) serves as a coordination point for substrate. 2 interaction with substrate tRNA regions span residues 38–41 (DSRQ) and 162–166 (QRVTR).

This sequence belongs to the IPP transferase family. In terms of assembly, monomer. It depends on Mg(2+) as a cofactor.

It carries out the reaction adenosine(37) in tRNA + dimethylallyl diphosphate = N(6)-dimethylallyladenosine(37) in tRNA + diphosphate. Functionally, catalyzes the transfer of a dimethylallyl group onto the adenine at position 37 in tRNAs that read codons beginning with uridine, leading to the formation of N6-(dimethylallyl)adenosine (i(6)A). This Nitratidesulfovibrio vulgaris (strain ATCC 29579 / DSM 644 / CCUG 34227 / NCIMB 8303 / VKM B-1760 / Hildenborough) (Desulfovibrio vulgaris) protein is tRNA dimethylallyltransferase.